The following is a 227-amino-acid chain: Uracil-DNA glycosylase (227 aa).

Asp65 functions as the Proton acceptor in the catalytic mechanism.

The protein belongs to the uracil-DNA glycosylase (UDG) superfamily. UNG family.

The protein localises to the cytoplasm. It carries out the reaction Hydrolyzes single-stranded DNA or mismatched double-stranded DNA and polynucleotides, releasing free uracil.. Excises uracil residues from the DNA which can arise as a result of misincorporation of dUMP residues by DNA polymerase or due to deamination of cytosine. The polypeptide is Uracil-DNA glycosylase (Lactobacillus delbrueckii subsp. bulgaricus (strain ATCC BAA-365 / Lb-18)).